Consider the following 484-residue polypeptide: Probable autolysin PH (484 aa).

Residues 5–148 (KNQAEKWFDN…YYDDPMYFIR (144 aa)) enclose the Peptidase C51 domain. A MurNAc-LAA domain is found at 181-363 (IMLVAGHGYN…YSKLIAGAIH (183 aa)). The SH3b domain maps to 402 to 472 (KETGYYTVAN…IATGEVDKAG (71 aa)).

The enzyme catalyses Hydrolyzes the link between N-acetylmuramoyl residues and L-amino acid residues in certain cell-wall glycopeptides.. Its function is as follows. Has weak lytic activity toward S.aureus cells. Full-length protein has no activity, but fusion of the Peptidase C51 domain to the lysostaphin SH3 cell wall binding domain yields an active chimeric enzyme, suggesting that PH may be functional. The protein is Probable autolysin PH of Staphylococcus aureus (strain NCTC 8325 / PS 47).